Here is a 206-residue protein sequence, read N- to C-terminus: FMN-dependent NADH:quinone oxidoreductase (206 aa).

Residues 15–17 (SVS), 94–97 (MYNF), and 138–141 (TRGG) contribute to the FMN site.

This sequence belongs to the azoreductase type 1 family. Homodimer. The cofactor is FMN.

It catalyses the reaction 2 a quinone + NADH + H(+) = 2 a 1,4-benzosemiquinone + NAD(+). The catalysed reaction is N,N-dimethyl-1,4-phenylenediamine + anthranilate + 2 NAD(+) = 2-(4-dimethylaminophenyl)diazenylbenzoate + 2 NADH + 2 H(+). In terms of biological role, quinone reductase that provides resistance to thiol-specific stress caused by electrophilic quinones. Its function is as follows. Also exhibits azoreductase activity. Catalyzes the reductive cleavage of the azo bond in aromatic azo compounds to the corresponding amines. This chain is FMN-dependent NADH:quinone oxidoreductase, found in Sinorhizobium medicae (strain WSM419) (Ensifer medicae).